The sequence spans 160 residues: Ureidoglycolate lyase (160 aa).

The protein belongs to the ureidoglycolate lyase family. Homodimer. It depends on Ni(2+) as a cofactor.

It catalyses the reaction (S)-ureidoglycolate = urea + glyoxylate. It participates in nitrogen metabolism; (S)-allantoin degradation. Its function is as follows. Catalyzes the catabolism of the allantoin degradation intermediate (S)-ureidoglycolate, generating urea and glyoxylate. Involved in the anaerobic utilization of allantoin as sole nitrogen source. Reinforces the induction of genes involved in the degradation of allantoin and glyoxylate by producing glyoxylate. This is Ureidoglycolate lyase from Escherichia coli (strain K12 / MC4100 / BW2952).